The primary structure comprises 141 residues: Hemoglobin subunit alpha (141 aa).

The 141-residue stretch at 1-141 folds into the Globin domain; that stretch reads VLSPADKKNV…VSTVLTSKYR (141 aa). Ser-3 is subject to Phosphoserine. 2 positions are modified to N6-succinyllysine: Lys-7 and Lys-11. An N6-acetyllysine; alternate modification is found at Lys-16. Residue Lys-16 is modified to N6-succinyllysine; alternate. Tyr-24 is subject to Phosphotyrosine. Ser-35 carries the phosphoserine modification. An N6-succinyllysine modification is found at Lys-40. Position 49 is a phosphoserine (Ser-49). Residue His-58 coordinates O2. His-87 contacts heme b. Ser-102 bears the Phosphoserine mark. Thr-108 is subject to Phosphothreonine. A phosphoserine mark is found at Ser-124 and Ser-131. A phosphothreonine mark is found at Thr-134 and Thr-137. Ser-138 is subject to Phosphoserine.

Belongs to the globin family. Heterotetramer of two alpha chains and two beta chains. Red blood cells.

Functionally, involved in oxygen transport from the lung to the various peripheral tissues. Its function is as follows. Hemopressin acts as an antagonist peptide of the cannabinoid receptor CNR1. Hemopressin-binding efficiently blocks cannabinoid receptor CNR1 and subsequent signaling. This Spermophilus citellus (European ground squirrel) protein is Hemoglobin subunit alpha (HBA).